Reading from the N-terminus, the 379-residue chain is tRNA-specific 2-thiouridylase MnmA (379 aa).

ATP is bound by residues 23-30 and L49; that span reads AMSGGVDS. C117 (nucleophile) is an active-site residue. Cysteines 117 and 214 form a disulfide. G141 is a binding site for ATP. The interaction with tRNA stretch occupies residues 163 to 165; the sequence is RDQ. C214 serves as the catalytic Cysteine persulfide intermediate.

The protein belongs to the MnmA/TRMU family.

The protein resides in the cytoplasm. The catalysed reaction is S-sulfanyl-L-cysteinyl-[protein] + uridine(34) in tRNA + AH2 + ATP = 2-thiouridine(34) in tRNA + L-cysteinyl-[protein] + A + AMP + diphosphate + H(+). In terms of biological role, catalyzes the 2-thiolation of uridine at the wobble position (U34) of tRNA, leading to the formation of s(2)U34. The chain is tRNA-specific 2-thiouridylase MnmA from Cereibacter sphaeroides (strain ATCC 17029 / ATH 2.4.9) (Rhodobacter sphaeroides).